The following is a 378-amino-acid chain: TelA-like protein SAUSA300_1299 (378 aa).

The protein belongs to the TelA family.

The sequence is that of TelA-like protein SAUSA300_1299 from Staphylococcus aureus (strain USA300).